Reading from the N-terminus, the 239-residue chain is Tetraspanin-9 (239 aa).

At 1–12 (MARGCLCCVKYM) the chain is on the cytoplasmic side. The helical transmembrane segment at 13 to 33 (LFLFNLLFWLGGCGLLGVGVW) threads the bilayer. Topologically, residues 34–55 (LSVSQGSFATLSPSFPSISAAN) are extracellular. A helical transmembrane segment spans residues 56–76 (LIITLGAVIMVTGFLGCLGAI). Residues 77–85 (KENKCLLLS) lie on the Cytoplasmic side of the membrane. The chain crosses the membrane as a helical span at residues 86–106 (FFITLLVILLAELILLILFFV). Residues 107–203 (YTDNVSENAR…VEEWLDDNKH (97 aa)) lie on the Extracellular side of the membrane. Residues Asn-110 and Asn-180 are each glycosylated (N-linked (GlcNAc...) asparagine). A helical transmembrane segment spans residues 204-224 (LLGTIAMCVLVIQLLGMAFSM). The Cytoplasmic portion of the chain corresponds to 225–239 (TLYQQIHRSGKKYEA).

The protein belongs to the tetraspanin (TM4SF) family.

It localises to the membrane. The sequence is that of Tetraspanin-9 (tspan9) from Salmo salar (Atlantic salmon).